Reading from the N-terminus, the 300-residue chain is Protein phosphatase 2C 1 (300 aa).

The region spanning 23–298 is the PPM-type phosphatase domain; the sequence is IFAASEMQGW…DNMTTILVYL (276 aa). Mn(2+) is bound by residues Asp-57, Gly-58, Asp-237, and Asp-289.

This sequence belongs to the PP2C family. Mg(2+) is required as a cofactor. The cofactor is Mn(2+). The N-terminus is blocked.

The protein resides in the membrane. It catalyses the reaction O-phospho-L-seryl-[protein] + H2O = L-seryl-[protein] + phosphate. The catalysed reaction is O-phospho-L-threonyl-[protein] + H2O = L-threonyl-[protein] + phosphate. Its function is as follows. Serine and threonine phosphatase. The sequence is that of Protein phosphatase 2C 1 from Paramecium tetraurelia.